The primary structure comprises 428 residues: MAARRRRVNRVATISVHTSPLDQPGTGDAGGMNVYIVEVARRLADLGIEVEIFTRRTARDLPPAVELHPGVLVRHVTAGPYEELDRADLPGQLCSFLSGVLRTEAMYEPGRYDVIHSHYWLSGQVGWLAKERWGVPLVHTMHTMAKVKNLRLAEGDKPEPAIRVLGEEQVVDVADRLVANTVTEARELIELYHAPPERVTVVNPGVNLNIFRPAPKAAARRRLGLPADARVLLFVGRIQPLKAPDVMLRAAAIMIAERPELRSRLIVACVGGPSGNGLARPSLLADLAAELGIADVVRLEPPAPQPELADWYRAADLTVVPSHNESFGLVALESQACGTPVAAASVGGLRTAVRHGVSGVLVDGHDPRQWAASLAELLDDPDRLAALSAGAVRHAARFGWSATAARLAEVYTEALERVHRTVPVGANS.

Histidine 17 provides a ligand contact to 1D-myo-inositol 3-phosphate. Residues glutamine 23 to proline 24 and glycine 31 each bind UDP-N-acetyl-alpha-D-glucosamine. 1D-myo-inositol 3-phosphate-binding positions include aspartate 28–asparagine 33, arginine 86, tyrosine 119, threonine 143, and arginine 163. UDP-N-acetyl-alpha-D-glucosamine contacts are provided by arginine 237 and lysine 242. 3 residues coordinate Mg(2+): tyrosine 312, arginine 313, and alanine 315. Residues glutamate 325 and glutamate 333 each contribute to the UDP-N-acetyl-alpha-D-glucosamine site. Threonine 339 lines the Mg(2+) pocket.

Belongs to the glycosyltransferase group 1 family. MshA subfamily. In terms of assembly, homodimer.

The enzyme catalyses 1D-myo-inositol 3-phosphate + UDP-N-acetyl-alpha-D-glucosamine = 1D-myo-inositol 2-acetamido-2-deoxy-alpha-D-glucopyranoside 3-phosphate + UDP + H(+). Functionally, catalyzes the transfer of a N-acetyl-glucosamine moiety to 1D-myo-inositol 3-phosphate to produce 1D-myo-inositol 2-acetamido-2-deoxy-glucopyranoside 3-phosphate in the mycothiol biosynthesis pathway. This is D-inositol 3-phosphate glycosyltransferase from Thermobispora bispora (strain ATCC 19993 / DSM 43833 / CBS 139.67 / JCM 10125 / KCTC 9307 / NBRC 14880 / R51).